The primary structure comprises 352 residues: Respiratory nitrate reductase subunit beta (352 aa).

One can recognise a 4Fe-4S ferredoxin-type 1 domain in the interval 20-48; sequence VAMVMDLNKCIGCQTCTVACKSLWTEGGG. The [4Fe-4S] cluster site is built by cysteine 29, cysteine 32, cysteine 35, and cysteine 39. Disordered stretches follow at residues 63–95 and 111–131; these read KGYP…KEDY and SDRP…DEDQ. Over residues 78–95 the composition is skewed to basic and acidic residues; the sequence is SSEHKERKPGQIPDKEDY. 2 4Fe-4S ferredoxin-type domains span residues 139 to 170 and 172 to 201; these read SYYF…KREE and GIVL…YNAT. Residues cysteine 148, cysteine 151, and cysteine 156 each coordinate [4Fe-4S] cluster. Positions 160, 181, and 187 each coordinate [3Fe-4S] cluster. Positions 191, 208, 211, 229, and 233 each coordinate [4Fe-4S] cluster.

Probable multiprotein complex; a catalytic heterodimer of an alpha and beta chain is proposed to associate with additional subunits involved in membrane attachment and electron transfer. The cofactor is [4Fe-4S] cluster. Requires [3Fe-4S] cluster as cofactor.

Its subcellular location is the cell membrane. It carries out the reaction nitrate + a quinol = a quinone + nitrite + H2O. Inhibited by cyanide, azide and antimycin A. Enzyme stability is not dependent on salt concentration. In terms of biological role, the respiratory membrane-bound nitrate reductase enzyme complex plays a role in generation of metabolic energy by using nitrate as a terminal electron acceptor during anaerobic conditions. The beta chain is an electron transfer unit containing four cysteine clusters involved in the formation of iron-sulfur centers. The sequence is that of Respiratory nitrate reductase subunit beta (narH) from Haloferax mediterranei (strain ATCC 33500 / DSM 1411 / JCM 8866 / NBRC 14739 / NCIMB 2177 / R-4) (Halobacterium mediterranei).